Here is a 364-residue protein sequence, read N- to C-terminus: Phosphoserine aminotransferase (364 aa).

Residue R46 participates in L-glutamate binding. Pyridoxal 5'-phosphate-binding positions include 80 to 81 (AR), W106, T157, D176, and Q199. K200 bears the N6-(pyridoxal phosphate)lysine mark. 241–242 (NT) is a pyridoxal 5'-phosphate binding site.

This sequence belongs to the class-V pyridoxal-phosphate-dependent aminotransferase family. SerC subfamily. As to quaternary structure, homodimer. It depends on pyridoxal 5'-phosphate as a cofactor.

It is found in the cytoplasm. The enzyme catalyses O-phospho-L-serine + 2-oxoglutarate = 3-phosphooxypyruvate + L-glutamate. It catalyses the reaction 4-(phosphooxy)-L-threonine + 2-oxoglutarate = (R)-3-hydroxy-2-oxo-4-phosphooxybutanoate + L-glutamate. The protein operates within amino-acid biosynthesis; L-serine biosynthesis; L-serine from 3-phospho-D-glycerate: step 2/3. It functions in the pathway cofactor biosynthesis; pyridoxine 5'-phosphate biosynthesis; pyridoxine 5'-phosphate from D-erythrose 4-phosphate: step 3/5. In terms of biological role, catalyzes the reversible conversion of 3-phosphohydroxypyruvate to phosphoserine and of 3-hydroxy-2-oxo-4-phosphonooxybutanoate to phosphohydroxythreonine. The polypeptide is Phosphoserine aminotransferase (Vibrio cholerae serotype O1 (strain ATCC 39315 / El Tor Inaba N16961)).